Reading from the N-terminus, the 255-residue chain is Small ribosomal subunit protein uS2 (255 aa).

Residues 231-255 (RLQTGAEEEFSTEGEEVVEETPAEA) are disordered. Over residues 236–255 (AEEEFSTEGEEVVEETPAEA) the composition is skewed to acidic residues.

This sequence belongs to the universal ribosomal protein uS2 family.

The protein is Small ribosomal subunit protein uS2 of Citrifermentans bemidjiense (strain ATCC BAA-1014 / DSM 16622 / JCM 12645 / Bem) (Geobacter bemidjiensis).